Reading from the N-terminus, the 219-residue chain is Glutathione S-transferase 3 (219 aa).

In terms of domain architecture, GST N-terminal spans 3–82; sequence DEVVLLDTWA…YIDEVWNDKS (80 aa). Residues S13, I54, and 66-67 each bind glutathione; that span reads ES. The GST C-terminal domain maps to 88–216; it reads DPYKRSQARF…GLIVELQKTL (129 aa).

It belongs to the GST superfamily. HSP26 family. Homodimer. degradation; (R)-lactate from methylglyoxal: step 1/2.

It catalyses the reaction RX + glutathione = an S-substituted glutathione + a halide anion + H(+). Functionally, conjugation of reduced glutathione to a wide number of exogenous and endogenous hydrophobic electrophiles. Involved in the detoxification of certain herbicides. The polypeptide is Glutathione S-transferase 3 (GST3) (Glycine max (Soybean)).